Here is a 433-residue protein sequence, read N- to C-terminus: Inositol hexakisphosphate kinase 1 (433 aa).

The segment at 100 to 160 (ETVEQDDTPE…SPKVELHSHS (61 aa)) is disordered. Over residues 113-123 (PRRKHSRRSLH) the composition is skewed to basic residues. The segment covering 139–149 (SFETSESSQEA) has biased composition (polar residues). The span at 150–160 (KSPKVELHSHS) shows a compositional bias: basic and acidic residues. Serine 151 is subject to Phosphoserine. Substrate is bound at residue 220-228 (PCVLDLKMG). Positions 359–383 (EVPPPCGPSTSPSSTSLEAGPSSPP) are disordered.

This sequence belongs to the inositol phosphokinase (IPK) family. As to expression, highly expressed in brain and testis. Detected at much lower levels in heart, kidney, liver, lung and spleen.

The protein resides in the cytoplasm. It is found in the nucleus. It catalyses the reaction 1D-myo-inositol hexakisphosphate + ATP = 5-diphospho-1D-myo-inositol 1,2,3,4,6-pentakisphosphate + ADP. The enzyme catalyses 1-diphospho-1D-myo-inositol 2,3,4,5,6-pentakisphosphate + ATP + H(+) = 1,5-bis(diphospho)-1D-myo-inositol 2,3,4,6-tetrakisphosphate + ADP. Its function is as follows. Converts inositol hexakisphosphate (InsP6) to diphosphoinositol pentakisphosphate (InsP7/PP-InsP5). Converts 1,3,4,5,6-pentakisphosphate (InsP5) to PP-InsP4. This is Inositol hexakisphosphate kinase 1 (Ip6k1) from Mus musculus (Mouse).